Here is a 1338-residue protein sequence, read N- to C-terminus: ABC-type transporter kk1G (1338 aa).

The interval 1-21 (MSAIELPPLRSRSEEAARAEH) is disordered. Positions 11–21 (SRSEEAARAEH) are enriched in basic and acidic residues. A run of 6 helical transmembrane segments spans residues 75–95 (YFLI…MPLM), 130–150 (LYIF…MLAI), 203–223 (HFAT…VALV), 230–250 (LIAS…FPPF), 312–332 (TMSP…WFGI), and 340–360 (ISSV…VMNI). One can recognise an ABC transmembrane type-1 1 domain in the interval 80 to 372 (LCCFTSIGAG…VASPIISIAK (293 aa)). Positions 405–706 (ITFINVAFSY…GDGVYYGLVH (302 aa)) constitute an ABC transporter 1 domain. An ATP-binding site is contributed by 440 to 447 (GPSGSGKS). Disordered stretches follow at residues 473–518 (EIPS…TCTG) and 715–747 (EDDD…HASR). The next 6 membrane-spanning stretches (helical) occupy residues 777–797 (VCCI…YIFA), 816–836 (FWAG…YLLG), 895–917 (MSMA…VYGW), 919–941 (LSLV…RTRL), 1003–1023 (IIFA…FWYG), and 1037–1057 (FFIV…WFSF). Positions 777–1063 (VCCIGILGAG…WFSFTPSMAQ (287 aa)) constitute an ABC transmembrane type-1 2 domain. The ABC transporter 2 domain maps to 1096-1333 (IEFQHVSFKY…KGVYWQMCQA (238 aa)). Residue 1130–1137 (GSSGCGKS) coordinates ATP.

The protein belongs to the ABC transporter superfamily. ABCB family. Multidrug resistance exporter (TC 3.A.1.201) subfamily.

Its subcellular location is the cell membrane. Its pathway is secondary metabolite biosynthesis. Functionally, ABC transporter; part of the gene cluster that mediates the biosynthesis of KK-1, a novel cyclic depsipeptide with 10 residues which is a promising active compound with high activity against many plant pathogens, especially Botrytis cinerea. Is probably directly involved in the secretion of KK-1 and thus confers self-tolerance against KK-1. The sequence is that of ABC-type transporter kk1G from Curvularia clavata.